Reading from the N-terminus, the 109-residue chain is MSRISSLQDPFLNALRKEKVSVSVYLVNGIKLQGQVEAFDQFCIVLRNTVNQMVYKHAISTIVPAKSVRMVYSSFNPYHQNANDDQDENVDDIHSDELEVQENQENINE.

The Sm domain maps to 9–68; that stretch reads DPFLNALRKEKVSVSVYLVNGIKLQGQVEAFDQFCIVLRNTVNQMVYKHAISTIVPAKSV.

The protein belongs to the Hfq family. As to quaternary structure, homohexamer.

Its function is as follows. RNA chaperone that binds small regulatory RNA (sRNAs) and mRNAs to facilitate mRNA translational regulation in response to envelope stress, environmental stress and changes in metabolite concentrations. Also binds with high specificity to tRNAs. This chain is RNA-binding protein Hfq, found in Francisella philomiragia subsp. philomiragia (strain ATCC 25017 / CCUG 19701 / FSC 153 / O#319-036).